The following is a 359-amino-acid chain: Cytochrome c oxidase subunit 2 (359 aa).

Residues 1 to 28 (MEQQNKRGLKRKALLGGVLGLGGLAMAG) form the signal peptide. Cys29 carries S-diacylglycerol cysteine lipidation. 2 helical membrane passes run 64–84 (VWVAAWIIGIIMWGLFLTAIF) and 107–127 (VPLELVLTIVPIIIVMVLFFF). The interval 168 to 203 (PGGQDYQGSDPERQAAAEASKKDPSGDNPIHGNSKS) is disordered. The span at 177–192 (DPERQAAAEASKKDPS) shows a compositional bias: basic and acidic residues. The Cu cation site is built by His244, Cys285, Glu287, Cys289, His293, and Met296. The segment at 335 to 359 (YATSTSPFVSDRTATRDGENTQSNA) is disordered.

In terms of assembly, associates with subunits I, III and IV to form cytochrome c oxidase. The 4 subunit cytochrome c oxidase forms a supercomplex with the menaquinol-cytochrome c reductase complex (cytochrome bc1). It depends on binuclear copper center (CuA) as a cofactor.

Its subcellular location is the cell membrane. It carries out the reaction 4 Fe(II)-[cytochrome c] + O2 + 8 H(+)(in) = 4 Fe(III)-[cytochrome c] + 2 H2O + 4 H(+)(out). Subunits I and II form the functional core of the enzyme complex. Electrons originating in cytochrome c are transferred via heme a and Cu(A) to the binuclear center formed by heme a3 and Cu(B). The polypeptide is Cytochrome c oxidase subunit 2 (ctaC) (Corynebacterium glutamicum (strain ATCC 13032 / DSM 20300 / JCM 1318 / BCRC 11384 / CCUG 27702 / LMG 3730 / NBRC 12168 / NCIMB 10025 / NRRL B-2784 / 534)).